Reading from the N-terminus, the 157-residue chain is Endoribonuclease YbeY (157 aa).

Zn(2+) contacts are provided by His-114, His-118, and His-124.

Belongs to the endoribonuclease YbeY family. It depends on Zn(2+) as a cofactor.

The protein resides in the cytoplasm. Its function is as follows. Single strand-specific metallo-endoribonuclease involved in late-stage 70S ribosome quality control and in maturation of the 3' terminus of the 16S rRNA. The polypeptide is Endoribonuclease YbeY (Edwardsiella ictaluri (strain 93-146)).